A 228-amino-acid chain; its full sequence is NOI-like protein (228 aa).

Residues 56–75 (AQDHQHSEKHHNDTSTDYHV) show a composition bias toward basic and acidic residues. Disordered regions lie at residues 56–87 (AQDH…HRRE) and 99–133 (RPHR…RNSD). Positions 76 to 86 (VKQHRRKHHRR) are enriched in basic residues. Polar residues predominate over residues 118-133 (HGTSATMSSSVKRNSD).

Belongs to the RIN4 family.

In Elaeis oleifera (American oil palm), this protein is NOI-like protein.